The sequence spans 170 residues: MRKLIIEPLTKEAFAPFGDVIETDGSDHFMINNGSTMRFHRLADVQTAQPEDKAIISIFRAEALPMPLTIGMLERHPLGSQAFVPLLGNPFLIVVAPVGDVPESEATRAFVSNGRQGVNYHRGVWHHPVLTIEKRDDFLVVDRSGEGNNCDEHYFAESQLLVLDPHPLEG.

Belongs to the ureidoglycolate lyase family. In terms of assembly, homodimer. Ni(2+) serves as cofactor.

It carries out the reaction (S)-ureidoglycolate = urea + glyoxylate. The protein operates within nitrogen metabolism; (S)-allantoin degradation. Functionally, catalyzes the catabolism of the allantoin degradation intermediate (S)-ureidoglycolate, generating urea and glyoxylate. Involved in the utilization of allantoin as nitrogen source. The polypeptide is Ureidoglycolate lyase (Pseudomonas syringae pv. syringae (strain B728a)).